Here is a 157-residue protein sequence, read N- to C-terminus: Methylglyoxal synthase (157 aa).

One can recognise an MGS-like domain in the interval 1-157 (MSKVKNIAVV…DFSSYTQRKL (157 aa)). Residues H12, K16, 38–41 (TGTT), and 71–72 (SG) contribute to the substrate site. D77 (proton donor/acceptor) is an active-site residue. H104 is a binding site for substrate.

The protein belongs to the methylglyoxal synthase family.

It catalyses the reaction dihydroxyacetone phosphate = methylglyoxal + phosphate. Its function is as follows. Catalyzes the formation of methylglyoxal from dihydroxyacetone phosphate. This is Methylglyoxal synthase from Maridesulfovibrio salexigens (strain ATCC 14822 / DSM 2638 / NCIMB 8403 / VKM B-1763) (Desulfovibrio salexigens).